A 212-amino-acid polypeptide reads, in one-letter code: Ribonuclease HII (212 aa).

In terms of domain architecture, RNase H type-2 spans T20 to S209. The a divalent metal cation site is built by D26, E27, and D117.

The protein belongs to the RNase HII family. Mn(2+) is required as a cofactor. Requires Mg(2+) as cofactor.

Its subcellular location is the cytoplasm. It catalyses the reaction Endonucleolytic cleavage to 5'-phosphomonoester.. Functionally, endonuclease that specifically degrades the RNA of RNA-DNA hybrids. The sequence is that of Ribonuclease HII from Cereibacter sphaeroides (strain ATCC 17023 / DSM 158 / JCM 6121 / CCUG 31486 / LMG 2827 / NBRC 12203 / NCIMB 8253 / ATH 2.4.1.) (Rhodobacter sphaeroides).